A 198-amino-acid polypeptide reads, in one-letter code: Nucleoid occlusion factor SlmA (198 aa).

Positions 10–70 (NRREEILQSL…SLIEFIEDSL (61 aa)) constitute an HTH tetR-type domain. Positions 33–52 (TTAKLAASVGVSEAALYRHF) form a DNA-binding region, H-T-H motif. A coiled-coil region spans residues 117–144 (EQDRLQGRINQLFERIEAQLRQVLREKR).

The protein belongs to the nucleoid occlusion factor SlmA family. Homodimer. Interacts with FtsZ.

Its subcellular location is the cytoplasm. It is found in the nucleoid. Functionally, required for nucleoid occlusion (NO) phenomenon, which prevents Z-ring formation and cell division over the nucleoid. Acts as a DNA-associated cell division inhibitor that binds simultaneously chromosomal DNA and FtsZ, and disrupts the assembly of FtsZ polymers. SlmA-DNA-binding sequences (SBS) are dispersed on non-Ter regions of the chromosome, preventing FtsZ polymerization at these regions. This is Nucleoid occlusion factor SlmA from Escherichia coli O45:K1 (strain S88 / ExPEC).